We begin with the raw amino-acid sequence, 270 residues long: NAD kinase (270 aa).

Catalysis depends on Asp-45, which acts as the Proton acceptor. NAD(+) is bound by residues 45–46 (DG), 121–122 (NE), Arg-147, Asp-149, 160–165 (TAYNKS), and Ala-184.

This sequence belongs to the NAD kinase family. It depends on a divalent metal cation as a cofactor.

The protein localises to the cytoplasm. The enzyme catalyses NAD(+) + ATP = ADP + NADP(+) + H(+). In terms of biological role, involved in the regulation of the intracellular balance of NAD and NADP, and is a key enzyme in the biosynthesis of NADP. Catalyzes specifically the phosphorylation on 2'-hydroxyl of the adenosine moiety of NAD to yield NADP. This is NAD kinase from Limosilactobacillus reuteri subsp. reuteri (strain JCM 1112) (Lactobacillus reuteri).